Consider the following 345-residue polypeptide: G-protein coupled receptor str-33 (345 aa).

At 1–11 (MTVNLRDLSRT) the chain is on the extracellular side. Residues 12 to 32 (IAEFAFLTALVCNSLLIYLTA) form a helical membrane-spanning segment. Residues 33 to 37 (RRTKN) lie on the Cytoplasmic side of the membrane. Residues 38-58 (ITGAYKYMIILFALLGLIFSC) form a helical membrane-spanning segment. Residues 59-92 (TEMLARPFVHNFNASFVYFSLSNDLSEFKSLVQM) lie on the Extracellular side of the membrane. A glycan (N-linked (GlcNAc...) asparagine) is linked at N71. Residues 93-113 (LLVLYSGLYSSLISFVAVQFI) traverse the membrane as a helical segment. Residues 114–133 (YRYMVLVNANLLESWFTGWK) lie on the Cytoplasmic side of the membrane. Residues 134–154 (LVFWVFYVIFFGFAWSASVYF) form a helical membrane-spanning segment. At 155-204 (CLFPDTYSYNYIRTEFKDVYNIGVDRVAIFILVAYEKHPSSEEYKLRPAS) the chain is on the extracellular side. Residues 205–225 (VIMIAGTISILVIQYSIMLFC) form a helical membrane-spanning segment. Topologically, residues 226–258 (GASMHRQMNEKLKNFSPDNQRLQKQFFKTLLLQ) are cytoplasmic. A helical membrane pass occupies residues 259 to 279 (ISVPTVLFHMPIFPVLLGPFF). The Extracellular segment spans residues 280 to 288 (NFEISAESG). The helical transmembrane segment at 289–309 (IIYSLFSLYPPIDGLIIMTVV) threads the bilayer. At 310-345 (TDYRIALTELFLGSHSGAQVEVIPVEVVSILNFSLL) the chain is on the cytoplasmic side.

The protein belongs to the nematode receptor-like protein str family. Detected in ALM and PLM mechanosensory neurons and head neurons.

The protein resides in the cell membrane. In terms of biological role, regulates egg-laying and locomotion. Likely to act upstream of goa-1 to suppress 5-hydroxytryptamine (5-HT) biosynthesis in hermaphrodite-specific neurons (HSNs) through inhibition of tph-1 transcription. This is G-protein coupled receptor str-33 from Caenorhabditis elegans.